The primary structure comprises 1230 residues: Cullin-associated NEDD8-dissociated protein 1 (1230 aa).

An N-acetylalanine modification is found at Ala-2. 12 HEAT repeats span residues Ala-2–Ile-39, Asp-44–Glu-81, Gln-83–Pro-119, Cys-131–Gln-165, Asn-171–Asn-208, Val-210–His-247, Arg-248–Phe-282, Glu-289–Glu-366, Glu-370–Pro-407, Pro-424–Gly-467, Gln-471–Pro-510, and Pro-515–Pro-552. Lys-55 is subject to N6-acetyllysine. Residues Asp-315–Asp-344 form a disordered region. Ser-335 carries the post-translational modification Phosphoserine. Ser-558 is modified (phosphoserine). 15 HEAT repeats span residues Pro-563–Asp-602, Pro-606–Asp-643, Pro-646–Asp-683, Ala-688–Ser-725, Lys-729–Asn-768, Leu-770–Arg-808, Ala-809–Val-845, Ser-852–Pro-889, Glu-890–Pro-927, Tyr-928–Leu-960, Ile-961–Gln-998, Pro-1002–Ser-1039, Asp-1043–Leu-1097, Arg-1099–Leu-1133, and Gln-1140–Ala-1189. Lys-971 carries the post-translational modification N6-acetyllysine.

This sequence belongs to the CAND family. Interacts with TBP. Part of a complex that contains CUL1 and RBX1. Interacts with unneddylated cullins: interacts with CUL1, CUL2, CUL3, CUL4A, CUL4B and CUL5. Does not bind neddylated CUL1. Interaction with cullins is abolished in presence of COMMD1, which antagonizes with CAND1 for interacting with cullins. Interacts with ERCC6. Interacts with DCUN1D1, DCUN1D2, DCUN1D3, DCUN1D4 and DCUN1D5; these interactions are bridged by cullins and strongly inhibits the neddylation of cullins. In terms of tissue distribution, detected in heart, brain, spleen, liver, skeletal muscle, kidney and testis.

Its subcellular location is the cytoplasm. The protein resides in the nucleus. Its function is as follows. Key assembly factor of SCF (SKP1-CUL1-F-box protein) E3 ubiquitin ligase complexes that promotes the exchange of the substrate-recognition F-box subunit in SCF complexes, thereby playing a key role in the cellular repertoire of SCF complexes. Acts as a F-box protein exchange factor. The exchange activity of CAND1 is coupled with cycles of neddylation conjugation: in the deneddylated state, cullin-binding CAND1 binds CUL1-RBX1, increasing dissociation of the SCF complex and promoting exchange of the F-box protein. Probably plays a similar role in other cullin-RING E3 ubiquitin ligase complexes. May indirectly enhance transcription from various types of promoters. This chain is Cullin-associated NEDD8-dissociated protein 1 (Cand1), found in Rattus norvegicus (Rat).